A 65-amino-acid polypeptide reads, in one-letter code: Large ribosomal subunit protein bL35 (65 aa).

A disordered region spans residues 1 to 22 (MPKIKTVRGAAKRFKKTGKGGF). Residues 10-22 (AAKRFKKTGKGGF) show a composition bias toward basic residues.

The protein belongs to the bacterial ribosomal protein bL35 family.

In Escherichia coli O127:H6 (strain E2348/69 / EPEC), this protein is Large ribosomal subunit protein bL35.